A 127-amino-acid chain; its full sequence is Small ribosomal subunit protein uS11 (127 aa).

Belongs to the universal ribosomal protein uS11 family. Part of the 30S ribosomal subunit. Interacts with proteins S7 and S18. Binds to IF-3.

Its function is as follows. Located on the platform of the 30S subunit, it bridges several disparate RNA helices of the 16S rRNA. Forms part of the Shine-Dalgarno cleft in the 70S ribosome. This Chlorobaculum parvum (strain DSM 263 / NCIMB 8327) (Chlorobium vibrioforme subsp. thiosulfatophilum) protein is Small ribosomal subunit protein uS11.